We begin with the raw amino-acid sequence, 270 residues long: Phosphatidylglycerol--prolipoprotein diacylglyceryl transferase (270 aa).

7 consecutive transmembrane segments (helical) span residues 10–30 (VAVA…LVGI), 56–76 (LIFW…VLFY), 92–112 (WKGG…AWWF), 120–140 (FFQL…AGRI), 175–195 (SQLY…NLYA), 202–222 (MAVS…VEFV), and 237–257 (VTMG…LIWL). Arg139 contacts a 1,2-diacyl-sn-glycero-3-phospho-(1'-sn-glycerol).

The protein belongs to the Lgt family.

The protein localises to the cell inner membrane. The enzyme catalyses L-cysteinyl-[prolipoprotein] + a 1,2-diacyl-sn-glycero-3-phospho-(1'-sn-glycerol) = an S-1,2-diacyl-sn-glyceryl-L-cysteinyl-[prolipoprotein] + sn-glycerol 1-phosphate + H(+). The protein operates within protein modification; lipoprotein biosynthesis (diacylglyceryl transfer). Its function is as follows. Catalyzes the transfer of the diacylglyceryl group from phosphatidylglycerol to the sulfhydryl group of the N-terminal cysteine of a prolipoprotein, the first step in the formation of mature lipoproteins. This chain is Phosphatidylglycerol--prolipoprotein diacylglyceryl transferase, found in Pseudomonas savastanoi pv. phaseolicola (strain 1448A / Race 6) (Pseudomonas syringae pv. phaseolicola (strain 1448A / Race 6)).